We begin with the raw amino-acid sequence, 423 residues long: L-cysteine:1D-myo-inositol 2-amino-2-deoxy-alpha-D-glucopyranoside ligase (423 aa).

Cysteine 45 provides a ligand contact to Zn(2+). L-cysteinyl-5'-AMP contacts are provided by residues 45–48 (CGIT), threonine 60, and 83–85 (NVT). A 'HIGH' region motif is present at residues 47–57 (ITPYDATHIGH). A 'ERGGDP' region motif is present at residues 197-202 (DRGGDP). Tryptophan 238 is a binding site for L-cysteinyl-5'-AMP. Position 242 (cysteine 242) interacts with Zn(2+). 260 to 262 (GSD) provides a ligand contact to L-cysteinyl-5'-AMP. Histidine 267 is a Zn(2+) binding site. Residue isoleucine 294 participates in L-cysteinyl-5'-AMP binding. A 'KMSKS' region motif is present at residues 300–304 (KMSKS).

The protein belongs to the class-I aminoacyl-tRNA synthetase family. MshC subfamily. As to quaternary structure, monomer. Zn(2+) serves as cofactor.

It carries out the reaction 1D-myo-inositol 2-amino-2-deoxy-alpha-D-glucopyranoside + L-cysteine + ATP = 1D-myo-inositol 2-(L-cysteinylamino)-2-deoxy-alpha-D-glucopyranoside + AMP + diphosphate + H(+). In terms of biological role, catalyzes the ATP-dependent condensation of GlcN-Ins and L-cysteine to form L-Cys-GlcN-Ins. This chain is L-cysteine:1D-myo-inositol 2-amino-2-deoxy-alpha-D-glucopyranoside ligase, found in Jonesia denitrificans (strain ATCC 14870 / DSM 20603 / BCRC 15368 / CIP 55.134 / JCM 11481 / NBRC 15587 / NCTC 10816 / Prevot 55134) (Listeria denitrificans).